We begin with the raw amino-acid sequence, 147 residues long: Nucleoside diphosphate kinase (147 aa).

ATP is bound by residues lysine 11, phenylalanine 59, arginine 87, threonine 93, arginine 104, and asparagine 114. Histidine 117 functions as the Pros-phosphohistidine intermediate in the catalytic mechanism.

The protein belongs to the NDK family. In terms of assembly, homotetramer. Requires Mg(2+) as cofactor.

It localises to the cytoplasm. It carries out the reaction a 2'-deoxyribonucleoside 5'-diphosphate + ATP = a 2'-deoxyribonucleoside 5'-triphosphate + ADP. It catalyses the reaction a ribonucleoside 5'-diphosphate + ATP = a ribonucleoside 5'-triphosphate + ADP. Functionally, major role in the synthesis of nucleoside triphosphates other than ATP. The ATP gamma phosphate is transferred to the NDP beta phosphate via a ping-pong mechanism, using a phosphorylated active-site intermediate. This chain is Nucleoside diphosphate kinase, found in Anaeromyxobacter dehalogenans (strain 2CP-C).